Reading from the N-terminus, the 251-residue chain is 3-dehydroquinate dehydratase (251 aa).

Residues E47–R49 and R83 each bind 3-dehydroquinate. H144 functions as the Proton donor/acceptor in the catalytic mechanism. The active-site Schiff-base intermediate with substrate is the K171. 3-dehydroquinate contacts are provided by R214, S233, and Q237.

The protein belongs to the type-I 3-dehydroquinase family. Homodimer.

The enzyme catalyses 3-dehydroquinate = 3-dehydroshikimate + H2O. Its pathway is metabolic intermediate biosynthesis; chorismate biosynthesis; chorismate from D-erythrose 4-phosphate and phosphoenolpyruvate: step 3/7. Functionally, involved in the third step of the chorismate pathway, which leads to the biosynthesis of aromatic amino acids. Catalyzes the cis-dehydration of 3-dehydroquinate (DHQ) and introduces the first double bond of the aromatic ring to yield 3-dehydroshikimate. This is 3-dehydroquinate dehydratase from Klebsiella pneumoniae subsp. pneumoniae (strain ATCC 700721 / MGH 78578).